Reading from the N-terminus, the 337-residue chain is MSSKKNFEVGENVACIYKGKPYDAKITDIKTNSDGKELYCVHFKGWNNRYDEKIPVGEEKDRIFKGTASEYAEKHNAELPTTALKPKKKSLAAEAPRDDRDDTPGTSKGKKAKSVTIAPVMTADDMKVELPKPLRKILIDDYDLVCRYFINIVPHEYSVDQIIEDYIKTIPVSNEQMRTVDDLLIEYEEADIKITNLALICTARGLVDYFNVTLGSSYQLLYKFERPQYNDLVKKRAMEKGIDITNPTALQDSGFRPSQEYGIVHFLRMLAKLPDYLKLTQWNDHVINRIMIGVHDLIVFLNKNHGKYYRGSSDYQGASNDYYRRSLAADDGVGANQ.

Positions 7-55 (FEVGENVACIYKGKPYDAKITDIKTNSDGKELYCVHFKGWNNRYDEKIP) constitute a Tudor-knot domain. Residues 75-113 (HNAELPTTALKPKKKSLAAEAPRDDRDDTPGTSKGKKAK) form a disordered region. The region spanning 122 to 327 (TADDMKVELP…ASNDYYRRSL (206 aa)) is the MRG domain.

Component of the SIN3S complex, which contains at least sin-3, hda-1, athp-1 and mrg-1. Interacts with cfp-1, a component of the SET2 complex. Interacts with rfp-1. As to expression, expressed in oocytes (at protein level). Expressed mainly in germ cells, but also at lower levels in several somatic cell types, including intestinal cells.

Its subcellular location is the nucleus. It localises to the chromosome. In terms of biological role, protein involved in the remodeling of chromatin thereby regulating various processes including transcription, chromosome synapsis and genome integrity. Mainly binds genomic loci carrying trimethylated histone H3 'Lys-36' (H3K36me3) or 'Lys-4' (H3K4me3), and acetylated histone H3 'Lys-9' (H3K9ac), 'Lys-27' (H3K27ac). During meiosis, required for the presynaptic pairing of homologous chromosomal regions outside of the pairing center and for the progression of chromosome synapsis. Essential maternal factor required in postembryonic germline development and in maintaining germ cell identity. Plays an important role in maintaining genomic integrity in primordial germ cells (PGCs) during meiosis by regulating DNA double-strand break (DSB) repair and synapsis. Also, required for chromatin-based transcriptional silencing in PGCs and for silencing of X-linked genes in the maternal germ line. By retaining histone acetyltransferase, cbp-1, in euchromatin, promotes the anchoring of heterochromatin at the inner nuclear membrane in intestinal and hypodermal cells. This chain is Mortality factor related protein 1, found in Caenorhabditis elegans.